Consider the following 434-residue polypeptide: Asparagine--tRNA ligase (434 aa).

This sequence belongs to the class-II aminoacyl-tRNA synthetase family.

The protein localises to the cytoplasm. It carries out the reaction tRNA(Asn) + L-asparagine + ATP = L-asparaginyl-tRNA(Asn) + AMP + diphosphate + H(+). This Pyrococcus abyssi (strain GE5 / Orsay) protein is Asparagine--tRNA ligase.